Here is a 204-residue protein sequence, read N- to C-terminus: Thymidylate kinase (204 aa).

13-20 contributes to the ATP binding site; it reads GIDGSGKS.

Belongs to the thymidylate kinase family.

The catalysed reaction is dTMP + ATP = dTDP + ADP. Functionally, phosphorylation of dTMP to form dTDP in both de novo and salvage pathways of dTTP synthesis. The sequence is that of Thymidylate kinase from Leptospira interrogans serogroup Icterohaemorrhagiae serovar copenhageni (strain Fiocruz L1-130).